The sequence spans 270 residues: Esterase (270 aa).

Residues serine 127, aspartate 216, and histidine 244 each act as charge relay system in the active site.

The protein belongs to the LovG family.

It functions in the pathway mycotoxin biosynthesis. Esterase; part of the gene cluster that mediates the biosynthesis of the selective antifungal agent ascochitine, an o-quinone methide that plays a possible protective role against other microbial competitors in nature and is considered to be important for pathogenicity of legume-associated Didymella species. The pathway probably begins with the synthesis of a keto-aldehyde intermediate by the ascochitine non-reducing polyketide synthase pksAC from successive condensations of 4 malonyl-CoA units, presumably with a simple acetyl-CoA starter unit. Release of the keto-aldehyde intermediate is consistent with the presence of the C-terminal reductive release domain. The HR-PKS (orf7) probably makes a diketide starter unit which is passed to the non-reducing polyketide synthase pksAC for further extension, producing ascochital and ascochitine. The aldehyde dehydrogenase (orf1), the 2-oxoglutarate-dependent dioxygenase (orf3) and the dehydrogenase (orf9) are probably involved in subsequent oxidations of methyl groups to the carboxylic acid of the heterocyclic ring. The ascochitine gene cluster also includes a gene encoding a short peptide with a cupin domain (orf2) that is often found in secondary metabolite gene clusters and which function has still to be determined. The sequence is that of Esterase from Didymella fabae (Leaf and pod spot disease fungus).